The sequence spans 320 residues: dTDP-glucose 4,6-dehydratase (320 aa).

Residues Phe-11 to Ile-12, Asp-38 to Gly-41, Asp-64 to Ile-65, Phe-84 to Thr-88, and Ser-103 each bind NAD(+). Residue Thr-88 participates in substrate binding. Thr-128 provides a ligand contact to substrate. Catalysis depends on Asp-129, which acts as the Proton donor. Catalysis depends on proton acceptor residues Glu-130 and Tyr-152. An NAD(+)-binding site is contributed by Tyr-152 to Lys-156. Asn-181 contributes to the substrate binding site. Asn-182 contributes to the NAD(+) binding site. Residues Lys-191–Met-192, Pro-207–Tyr-209, Arg-216, Asn-251, and Asp-274–His-278 contribute to the substrate site.

It belongs to the NAD(P)-dependent epimerase/dehydratase family. dTDP-glucose dehydratase subfamily. Homodimer. Requires NAD(+) as cofactor.

The enzyme catalyses dTDP-alpha-D-glucose = dTDP-4-dehydro-6-deoxy-alpha-D-glucose + H2O. In terms of biological role, probably involved in the biosynthesis of the acarviose moiety of the alpha-glucosidase inhibitor acarbose. Catalyzes the dehydration of dTDP-D-glucose to form dTDP-6-deoxy-D-xylo-4-hexulose via a three-step process involving oxidation, dehydration and reduction. The polypeptide is dTDP-glucose 4,6-dehydratase (Actinoplanes sp. (strain ATCC 31044 / CBS 674.73 / SE50/110)).